The sequence spans 195 residues: Thymidine kinase (195 aa).

ATP is bound by residues 15–22 and 88–91; these read GSMFSGKS and DEVQ. E89 (proton acceptor) is an active-site residue. Residues C145, C148, C183, and X186 each contribute to the Zn(2+) site.

Belongs to the thymidine kinase family. As to quaternary structure, homotetramer.

It localises to the cytoplasm. It catalyses the reaction thymidine + ATP = dTMP + ADP + H(+). The sequence is that of Thymidine kinase from Bacillus cereus (strain ATCC 10987 / NRS 248).